The following is an 860-amino-acid chain: Spindle and centriole-associated protein 1 (860 aa).

4 disordered regions span residues 127–150 (RKRTGFPNVTRAPDSSQSHTGINQ), 172–201 (DDAGEQSTAHSQSEDSENELPNSLSQHSNR), 230–250 (ATQSQRTPPGSPSSELSAEDQ), and 294–332 (PLLAKVKRKQDMHAASKQKTNMLSSSTASADRPSSTGSS). Polar residues-rich tracts occupy residues 139–150 (PDSSQSHTGINQ), 190–200 (ELPNSLSQHSN), and 230–245 (ATQSQRTPPGSPSSEL). Thr236 is modified (phosphothreonine). A Phosphoserine modification is found at Ser240. Positions 317–329 (SSSTASADRPSST) are enriched in low complexity. Positions 383 to 439 (RYLKESEIQLRKEVETRQQLEQMLGDHRELIDALTAEILSLREENSTMQARLQQYMV) form a coiled coil. Residues 623-645 (PAFVSLSQPPCSSLPSTQQPRNP) form a disordered region. Over residues 627–642 (SLSQPPCSSLPSTQQP) the composition is skewed to low complexity. Residue Ser648 is modified to Phosphoserine. The tract at residues 693–718 (ITSSGGEQGDGLREPRKQGSASEVST) is disordered. Positions 729–757 (SSMEERIAELNRQSMEARSKLLQLIEQQK) form a coiled coil. Ser765, Ser766, Ser769, and Ser824 each carry phosphoserine. Residues 792 to 860 (GMEASESSKC…GWFALSAHIP (69 aa)) are disordered. Low complexity predominate over residues 804-824 (VSPVSGNSSRRSSGAISNSCS).

In terms of assembly, interacts with CEP120.

It is found in the cytoplasm. Its subcellular location is the cytoskeleton. The protein localises to the microtubule organizing center. The protein resides in the centrosome. It localises to the centriole. It is found in the spindle. Functionally, regulator required for centriole duplication, for proper bipolar spindle formation and chromosome congression in mitosis. The polypeptide is Spindle and centriole-associated protein 1 (Spice1) (Mus musculus (Mouse)).